The following is a 558-amino-acid chain: SPATS2-like protein (558 aa).

Ala-2 carries the N-acetylalanine modification. The segment covering 63–79 (GKKKNNKRKRSKSKQHQ) has biased composition (basic residues). A disordered region spans residues 63–204 (GKKKNNKRKR…SPVKSNAPAA (142 aa)). Composition is skewed to basic and acidic residues over residues 80 to 92 (GNKD…ERPE) and 110 to 142 (GCEK…EPPR). Ser-120 carries the post-translational modification Phosphoserine. Positions 279–344 (KEEAMDILTA…ARFSCDIEQL (66 aa)) form a coiled coil. Disordered stretches follow at residues 385 to 406 (GNFA…ANPK) and 421 to 514 (TMPT…RQHA). Residues 421-433 (TMPTNKQQNGPSS) show a composition bias toward polar residues. Over residues 469 to 485 (HEHRRQPHNGFRPKNKG) the composition is skewed to basic residues.

It belongs to the SPATS2 family.

It is found in the cytoplasm. It localises to the nucleus. The protein localises to the nucleolus. This chain is SPATS2-like protein (Spats2l), found in Mus musculus (Mouse).